The following is a 93-amino-acid chain: Large ribosomal subunit protein uL23 (93 aa).

It belongs to the universal ribosomal protein uL23 family. Part of the 50S ribosomal subunit. Contacts protein L29, and trigger factor when it is bound to the ribosome.

Its function is as follows. One of the early assembly proteins it binds 23S rRNA. One of the proteins that surrounds the polypeptide exit tunnel on the outside of the ribosome. Forms the main docking site for trigger factor binding to the ribosome. The polypeptide is Large ribosomal subunit protein uL23 (Campylobacter jejuni subsp. doylei (strain ATCC BAA-1458 / RM4099 / 269.97)).